Here is an 843-residue protein sequence, read N- to C-terminus: Receptor-like serine/threonine-protein kinase SD1-7 (843 aa).

The signal sequence occupies residues 1–31; it reads MRSVPNYHHSFFIFLILILFLAFSVSPNTLS. The Bulb-type lectin domain maps to 32-151; sequence ATESLTISSN…NNRLLWQSFD (120 aa). At 32-435 the chain is on the extracellular side; it reads ATESLTISSN…LEDKRIKNEK (404 aa). N-linked (GlcNAc...) asparagine glycosylation is found at Asn41, Asn92, Asn116, Asn236, and Asn251. In terms of domain architecture, EGF-like; atypical spans 286–322; that stretch reads PKDLCDNYKVCGNFGYCDSNSLPNCYCIKGFKPVNEQ. 4 cysteine pairs are disulfide-bonded: Cys290–Cys302, Cys296–Cys310, Cys372–Cys397, and Cys376–Cys382. Residues 341-422 form the PAN domain; the sequence is CDGRDGFTRL…GGQDLYVRLA (82 aa). Residue Asn381 is glycosylated (N-linked (GlcNAc...) asparagine). The chain crosses the membrane as a helical span at residues 436–456; the sequence is IIGSSIGVSILLLLSFVIFHF. Residues 457–843 are Cytoplasmic-facing; sequence WKRKQKRSIT…QITLSVIDAR (387 aa). The 291-residue stretch at 519-809 folds into the Protein kinase domain; it reads FSNDNKLGQG…AIPQPKRPGF (291 aa). Residues 525 to 533 and Lys547 contribute to the ATP site; that span reads LGQGGFGIV. A Phosphoserine modification is found at Ser553. The interval 608 to 625 is caM-binding; sequence TRSSNLNWQKRFDIINGI. Asp644 acts as the Proton acceptor in catalysis. Phosphoserine is present on residues Ser648 and Ser661. The residue at position 678 (Thr678) is a Phosphothreonine. Phosphoserine is present on Ser820.

It belongs to the protein kinase superfamily. Ser/Thr protein kinase family. In terms of assembly, interacts with PUB9, PUB13, PUB14 and PUB38. Post-translationally, autophosphorylated on serine and threonine residues. As to expression, mostly expressed in leaves, and, to a lower extent, in stems and flower buds.

It is found in the cell membrane. It carries out the reaction L-seryl-[protein] + ATP = O-phospho-L-seryl-[protein] + ADP + H(+). It catalyses the reaction L-threonyl-[protein] + ATP = O-phospho-L-threonyl-[protein] + ADP + H(+). Involved in the regulation of cellular expansion and differentiation. Mediates subcellular relocalization of PUB9 from nucleus to plasma membrane in a protein-phosphorylation-dependent manner. May be involved in the abscisic acid-mediated signaling pathway, at least during germination. The protein is Receptor-like serine/threonine-protein kinase SD1-7 (SD17) of Arabidopsis thaliana (Mouse-ear cress).